Here is a 178-residue protein sequence, read N- to C-terminus: uncharacterized protein (178 aa).

Residues 152–178 are disordered; the sequence is KKLKGAEPKEHQAPNFEPPTEIFPESN.

Belongs to the EUO family.

This is an uncharacterized protein from Chlamydia pneumoniae (Chlamydophila pneumoniae).